The following is a 306-amino-acid chain: Natural cytotoxicity triggering receptor 1 (306 aa).

Residues 1–21 (MSSTLRALLCLGLCLSQRISA) form the signal peptide. Residues 22 to 257 (PKQTLPKPII…WDHTAQNLLR (236 aa)) lie on the Extracellular side of the membrane. 2 Ig-like domains span residues 42-100 (EKQA…SCIY) and 137-192 (GEKV…RCFG). Cystine bridges form between C49-C98 and C144-C190. The N-linked (GlcNAc...) asparagine glycan is linked to N216. Residues 258-278 (MGLAFLVLVALVCLLVEDWLS) traverse the membrane as a helical segment. At 279–306 (RKRTREQASRASTWEGRRRLNKHKDSEE) the chain is on the cytoplasmic side.

The protein belongs to the natural cytotoxicity receptor (NCR) family. In terms of assembly, interacts with CD3Z and FCER1G. In terms of tissue distribution, expressed in NK cells.

The protein localises to the cell membrane. Functionally, cytotoxicity-activating receptor that may contribute to the increased efficiency of activated natural killer (NK) cells to mediate tumor cell lysis. The chain is Natural cytotoxicity triggering receptor 1 (NCR1) from Macaca fascicularis (Crab-eating macaque).